The primary structure comprises 190 residues: Zinc finger C2H2 protein ECU03_0790 (190 aa).

C2H2-type zinc fingers lie at residues arginine 4 to histidine 27, tyrosine 33 to histidine 55, tyrosine 85 to histidine 108, and histidine 119 to histidine 142.

The protein is Zinc finger C2H2 protein ECU03_0790 of Encephalitozoon cuniculi (strain GB-M1) (Microsporidian parasite).